The sequence spans 371 residues: UDP-N-acetylglucosamine--N-acetylmuramyl-(pentapeptide) pyrophosphoryl-undecaprenol N-acetylglucosamine transferase (371 aa).

UDP-N-acetyl-alpha-D-glucosamine is bound by residues 10 to 12 (TGG), asparagine 124, arginine 165, serine 197, isoleucine 251, and glutamine 296.

This sequence belongs to the glycosyltransferase 28 family. MurG subfamily.

It is found in the cell membrane. The enzyme catalyses di-trans,octa-cis-undecaprenyl diphospho-N-acetyl-alpha-D-muramoyl-L-alanyl-D-glutamyl-meso-2,6-diaminopimeloyl-D-alanyl-D-alanine + UDP-N-acetyl-alpha-D-glucosamine = di-trans,octa-cis-undecaprenyl diphospho-[N-acetyl-alpha-D-glucosaminyl-(1-&gt;4)]-N-acetyl-alpha-D-muramoyl-L-alanyl-D-glutamyl-meso-2,6-diaminopimeloyl-D-alanyl-D-alanine + UDP + H(+). It participates in cell wall biogenesis; peptidoglycan biosynthesis. In terms of biological role, cell wall formation. Catalyzes the transfer of a GlcNAc subunit on undecaprenyl-pyrophosphoryl-MurNAc-pentapeptide (lipid intermediate I) to form undecaprenyl-pyrophosphoryl-MurNAc-(pentapeptide)GlcNAc (lipid intermediate II). This Carboxydothermus hydrogenoformans (strain ATCC BAA-161 / DSM 6008 / Z-2901) protein is UDP-N-acetylglucosamine--N-acetylmuramyl-(pentapeptide) pyrophosphoryl-undecaprenol N-acetylglucosamine transferase.